The sequence spans 818 residues: H(+)/Cl(-) exchange transporter 3 (818 aa).

At 1-125 the chain is on the cytoplasmic side; the sequence is MESEQLFHRG…WEMTKSLYDA (125 aa). Positions 13–17 match the Di-leucine internalization motif; mediates targeting to late endosome and lysosome membranes motif; that stretch reads RNSYN. The IP motif; mediates targeting to recycling endosomes signature appears at 18 to 19; that stretch reads SI. Short sequence motifs (di-leucine internalization motif; mediates targeting to late endosome and lysosome membranes) lie at residues 28-29, 46-47, and 71-75; these read LL and LLDLL. The chain crosses the membrane as a helical span at residues 126 to 163; it reads WSGWLVVTLTGLASGALAGLIDIAADWMTDLKEGICLS. Asn177 is a glycosylation site (N-linked (GlcNAc...) asparagine). Residues 209–232 traverse the membrane as a helical segment; sequence MNYIMYIFWALSFAFLAVSLVKVF. A Selectivity filter part_1 motif is present at residues 238-242; the sequence is GSGIP. Ser239 contributes to the chloride binding site. An intramembrane region (helical) is located at residues 241–248; it reads IPEIKTIL. 2 helical membrane passes run 258–276 and 282–301; these read GKWT…VASG and EGPL…YLFP. The short motif at 280–284 is the Selectivity filter part_2 element; sequence GKEGP. Intramembrane regions (helical) lie at residues 313–325 and 329–337; these read VLSA…VSVA and PIGGVLFSL. The next 3 helical transmembrane spans lie at 349 to 367, 391 to 416, and 423 to 443; these read LWRS…RSIN, FPFI…AWCR, and FGKY…VIAF. N-linked (GlcNAc...) asparagine glycosylation is found at Asn451 and Asn479. A run of 2 helical transmembrane segments spans residues 500–520 and 525–544; these read IWQL…TFGI and GLFI…VGIA. A Selectivity filter part_3 motif is present at residues 525 to 529; that stretch reads GLFIP. Phe527 serves as a coordination point for chloride. 2 consecutive intramembrane regions (helical) follow at residues 572–586 and 590–601; these read GLYA…LGGV and TVSLVVIVFELT. Residues 602-605 constitute an intramembrane region (note=Loop between two helices); it reads GGLE. Residues 606-624 traverse the membrane as a helical segment; the sequence is YIVPLMAAVMTSKWVGDAF. Residues 625-818 lie on the Cytoplasmic side of the membrane; the sequence is GREGIYEAHI…NQDPASIMFN (194 aa). Residue Tyr630 participates in chloride binding. CBS domains are found at residues 658-722 and 755-812; these read MRPR…ARKK and LDMS…NQDP. ATP is bound by residues 689–691 and 796–799; these read YNG and TKKD.

Belongs to the chloride channel (TC 2.A.49) family. ClC-3/CLCN3 subfamily. In terms of assembly, monomer and homodimer. Forms heterodimers with CLCN4. Post-translationally, N-glycosylated. In terms of tissue distribution, detected in kidney, in the apical part of proximal tubule cells (at protein level). Expressed at high levels in the kidney while a low level expression is seen in the brain. Within the brain, it is prominent in the hippocampus, cerebral cortex and olfactory bulb. As to expression, brain, pancreas, kidney, liver, lung, retina, olfactory bulb, and spinal cord. Pancreas, kidney, liver, lung and retina. In terms of tissue distribution, brain, heart, pancreas, kidney, liver, lung, retina, olfactory bulb, and spinal cord. As to expression, expressed at high levels in the liver and at low levels in the brain.

The protein resides in the cytoplasmic vesicle. The protein localises to the secretory vesicle membrane. It localises to the lysosome membrane. It is found in the late endosome membrane. Its subcellular location is the cell membrane. The protein resides in the early endosome membrane. The protein localises to the recycling endosome membrane. With respect to regulation, inhibited by Cd(2+). Functionally, may influence large dense-core vesicle exocytosis in adrenal chromaffin cells. Its function is as follows. Strongly outwardly rectifying, electrogenic H(+)/Cl(-)exchanger which mediates the exchange of chloride ions against protons. The CLC channel family contains both chloride channels and proton-coupled anion transporters that exchange chloride or another anion for protons. The presence of conserved gating glutamate residues is typical for family members that function as antiporters. Strongly outwardly rectifying, electrogenic H(+)/Cl(-)exchanger which mediates the exchange of chloride ions against protons. Facilitates endosomal acidification and chloride accumulation in hepatocytes. In terms of biological role, strongly outwardly rectifying, electrogenic H(+)/Cl(-)exchanger which mediates the exchange of chloride ions against protons. In Mus musculus (Mouse), this protein is H(+)/Cl(-) exchange transporter 3 (Clcn3).